Reading from the N-terminus, the 149-residue chain is Large ribosomal subunit protein bL9 (149 aa).

Belongs to the bacterial ribosomal protein bL9 family.

Functionally, binds to the 23S rRNA. This chain is Large ribosomal subunit protein bL9, found in Enterobacter sp. (strain 638).